The primary structure comprises 395 residues: MPPKKNVVEEKPALIGRLGTNLKVGILGLPNVGKSTFFNVLTKSEAQAENFPFCTIDPNESRVAVQDDRFDWLVNHYKPASKVPAFLNVTDIAGLVKGASEGQGLGNAFLSHVSACDALFHLCRAFDDDDVTHVEGEVDPVRDLEIISNELFAKDLQFIDGPLDKVEKLFTRANDKTKKIEYDTLVRVKKCLEEKKPVRQELWNEKEIEILNKHLFLTAKPIVYLVNLSEKDYIRKKNKWLPKIKAWIDTNDAGAVLIPFSGAFELKLLDMPEDERQKYLKEQGVTSNLDKIVHTGYKALQLEYFFTSGEDEVKAWTIQVGTPAPKAAGRIHTDFEKGFIMAEVMKVADLIELGDEAKCKAGGKYRQQGKTYIVQDGDVIFFKFNAGAGLQAKKK.

The OBG-type G domain maps to 22–280 (LKVGILGLPN…MPEDERQKYL (259 aa)). Position 31–36 (31–36 (NVGKST)) interacts with ATP. Mg(2+)-binding residues include serine 35 and threonine 55. Leucine 228 is a binding site for ATP. Positions 301–384 (QLEYFFTSGE…QDGDVIFFKF (84 aa)) constitute a TGS domain.

Belongs to the TRAFAC class OBG-HflX-like GTPase superfamily. OBG GTPase family. YchF/OLA1 subfamily. In terms of assembly, monomer. Mg(2+) serves as cofactor. As to expression, expressed in the nervous system, pharyngeal muscles and intestine (at protein level).

Its subcellular location is the cytoplasm. Functionally, hydrolyzes ATP, and can also hydrolyze GTP with lower efficiency. Has lower affinity for GTP. Plays a role in regulating starvation-induced thermotaxis responses in AFD thermosensory neurons. This chain is Obg-like ATPase 1, found in Caenorhabditis elegans.